The primary structure comprises 320 residues: Cytochrome f (320 aa).

An N-terminal signal peptide occupies residues 1 to 35 (MQTRNTFSWIREEITRSISVSLMIYIITWASISSA). The heme site is built by tyrosine 36, cysteine 56, cysteine 59, and histidine 60. A helical transmembrane segment spans residues 286–305 (VQGLLFFLGSVVLAQIFLVL).

The protein belongs to the cytochrome f family. As to quaternary structure, the 4 large subunits of the cytochrome b6-f complex are cytochrome b6, subunit IV (17 kDa polypeptide, petD), cytochrome f and the Rieske protein, while the 4 small subunits are PetG, PetL, PetM and PetN. The complex functions as a dimer. It depends on heme as a cofactor. Post-translationally, purified from leaves as a water-soluble monomeric protein with a mass of 28.16 kDa, cleavage occurs after Gln-287 and separates the heme-binding from the membrane.

Its subcellular location is the plastid. The protein localises to the chloroplast thylakoid membrane. Its function is as follows. Component of the cytochrome b6-f complex, which mediates electron transfer between photosystem II (PSII) and photosystem I (PSI), cyclic electron flow around PSI, and state transitions. The protein is Cytochrome f (petA) of Brassica rapa subsp. rapa (Turnip).